The chain runs to 89 residues: HssA/B-like protein 10 (89 aa).

This sequence belongs to the hssA/B family.

This is HssA/B-like protein 10 (hssl10) from Dictyostelium discoideum (Social amoeba).